Reading from the N-terminus, the 328-residue chain is tRNA dimethylallyltransferase (328 aa).

10 to 17 (GPTASGKT) is a binding site for ATP. Position 12-17 (12-17 (TASGKT)) interacts with substrate.

This sequence belongs to the IPP transferase family. As to quaternary structure, monomer. The cofactor is Mg(2+).

The catalysed reaction is adenosine(37) in tRNA + dimethylallyl diphosphate = N(6)-dimethylallyladenosine(37) in tRNA + diphosphate. Catalyzes the transfer of a dimethylallyl group onto the adenine at position 37 in tRNAs that read codons beginning with uridine, leading to the formation of N6-(dimethylallyl)adenosine (i(6)A). This Bifidobacterium longum (strain NCC 2705) protein is tRNA dimethylallyltransferase.